The primary structure comprises 342 residues: Heat-inducible transcription repressor HrcA (342 aa).

Belongs to the HrcA family.

Functionally, negative regulator of class I heat shock genes (grpE-dnaK-dnaJ and groELS operons). Prevents heat-shock induction of these operons. This is Heat-inducible transcription repressor HrcA from Corynebacterium efficiens (strain DSM 44549 / YS-314 / AJ 12310 / JCM 11189 / NBRC 100395).